We begin with the raw amino-acid sequence, 975 residues long: Importin-11 (975 aa).

Residue Met-1 is modified to N-acetylmethionine. The region spanning 28 to 100 (AEEQLKQWET…RAGLITNFNE (73 aa)) is the Importin N-terminal domain. 15 HEAT repeats span residues 123–160 (RQWPELIPTLIESVKVQDDLRQHRALLTFYHVTKTLAS), 209–248 (ERTLLSLKVLRKLTVNGFVEPHKNMEVMGFLHGIFERLKQ), 318–356 (VQCMNLIKMIVKNYAYKPSKNFEDSSPETLEAHKIKMAF), 422–459 (QTLTPVLLEMMQTLQGPTNVEDMNALLIKDAVYNAVGL), 473–509 (WFKNQLLPELQVIHNRYKPLRRRVIWLIGQWISVKFK), 511–548 (DLRPMLYEAICNLLQDQDLVVRIETATTLKLTVDDFEF), 555–593 (PYLETMFTLLFQLLQQVTECDTKMHVLHVLSCVIERVNM), 600–636 (GCLVQYLPLLWKQSEEHNMLRCAILTTLIHLVQGLGA), 640–677 (NLYPFLLPVIQLSTDVSQPPHVYLLEDGLELWLVTLEN), 683–720 (PELLRIFQNMSPLLELSSENLRTCFKIINGYIFLSSTE), 743–764 (EGQVQVLKVVENALKVNPILGP), 765–804 (QMFQPILPYVFKGIIEGERYPVVMSTYLGVMGRVLLQNTS), 819–849 (QEMDQLLGNMIEMWVDRMDNITQPERRKLSA), 850–887 (LALLSLLPSDNSVIQDKFCGIINISVEGLHDVMTEDPE), and 957–974 (METVDTEIVTQLQEFLQG). A Phosphoserine modification is found at Ser-343.

Belongs to the importin beta family. Interacts with UBE2E3 and RPL12.

Its subcellular location is the cytoplasm. The protein localises to the nucleus. Its function is as follows. Functions in nuclear protein import as nuclear transport receptor. Serves as receptor for nuclear localization signals (NLS) in cargo substrates. Is thought to mediate docking of the importin/substrate complex to the nuclear pore complex (NPC) through binding to nucleoporin and the complex is subsequently translocated through the pore by an energy requiring, Ran-dependent mechanism. At the nucleoplasmic side of the NPC, Ran binds to the importin, the importin/substrate complex dissociates and importin is re-exported from the nucleus to the cytoplasm where GTP hydrolysis releases Ran. The directionality of nuclear import is thought to be conferred by an asymmetric distribution of the GTP- and GDP-bound forms of Ran between the cytoplasm and nucleus. Mediates the nuclear import of UBE2E3, and of RPL12. This is Importin-11 (IPO11) from Homo sapiens (Human).